Here is a 333-residue protein sequence, read N- to C-terminus: MIDGQTTEPKQKTRIILAPMQGLVDDVMRDLLTRIGGYDECVSEFVRITHTVHSRATWLKYVPEIANGNKTFSGTPCTVQLLGSDADNMAANALEAVRFGADKIDLNFGCPAPTVNRHKGGAILLKEPELIFHIVKTLRERLPAHIPLTAKMRLGYEDKSPALECACAIAEGGACGLTVHARTKAEGYEPPAHWEWIRKIRDSVDIPVTANGDVFSLQDYIGIKTISGCNSVMLGRGAVIRPDLARQIKQYENGGPVKDTDFAEVSKWIRQFFELCLTKEANNKYPIARLKQWLGMMKKTFDPAQTLFDRVRTVKDADEVRRILNAFEHEINV.

Residues 19–21 (PMQ) and Gln-80 each bind FMN. Cys-110 functions as the Proton donor in the catalytic mechanism. Residues Lys-151, 211–213 (NGD), and 235–236 (GR) contribute to the FMN site.

This sequence belongs to the Dus family. DusC subfamily. The cofactor is FMN.

The enzyme catalyses 5,6-dihydrouridine(16) in tRNA + NADP(+) = uridine(16) in tRNA + NADPH + H(+). The catalysed reaction is 5,6-dihydrouridine(16) in tRNA + NAD(+) = uridine(16) in tRNA + NADH + H(+). Catalyzes the synthesis of 5,6-dihydrouridine (D), a modified base found in the D-loop of most tRNAs, via the reduction of the C5-C6 double bond in target uridines. Specifically modifies U16 in tRNAs. This Neisseria meningitidis serogroup A / serotype 4A (strain DSM 15465 / Z2491) protein is tRNA-dihydrouridine(16) synthase.